Reading from the N-terminus, the 132-residue chain is uncharacterized protein (132 aa).

Positions 107–132 (LNTFSGSGQKHSQPGSGQHPFSFRKD) are disordered. Residues 108–122 (NTFSGSGQKHSQPGS) are compositionally biased toward polar residues.

This is an uncharacterized protein from Bacillus subtilis (strain 168).